A 274-amino-acid chain; its full sequence is N-acetylmuramic acid 6-phosphate etherase (274 aa).

The region spanning 54-217 (IIPRIDSGGR…STSVMIKLGR (164 aa)) is the SIS domain. The active-site Proton donor is E82. E113 is a catalytic residue.

This sequence belongs to the GCKR-like family. MurNAc-6-P etherase subfamily. In terms of assembly, homodimer.

It catalyses the reaction N-acetyl-D-muramate 6-phosphate + H2O = N-acetyl-D-glucosamine 6-phosphate + (R)-lactate. It functions in the pathway amino-sugar metabolism; N-acetylmuramate degradation. Its function is as follows. Specifically catalyzes the cleavage of the D-lactyl ether substituent of MurNAc 6-phosphate, producing GlcNAc 6-phosphate and D-lactate. This Christiangramia forsetii (strain DSM 17595 / CGMCC 1.15422 / KT0803) (Gramella forsetii) protein is N-acetylmuramic acid 6-phosphate etherase.